The primary structure comprises 428 residues: Elongation factor 1-alpha (428 aa).

The tr-type G domain maps to 5-215 (KPHINIVFIG…ALDQMPEPPK (211 aa)). The tract at residues 14–21 (GHVDHGKS) is G1. A GTP-binding site is contributed by 14–21 (GHVDHGKS). Mg(2+) is bound at residue serine 21. Positions 68–72 (GITID) are G2. A G3 region spans residues 89-92 (DAPG). Residues 89–93 (DAPGH) and 144–147 (NKMD) each bind GTP. A G4 region spans residues 144 to 147 (NKMD). The interval 181 to 183 (SAW) is G5.

This sequence belongs to the TRAFAC class translation factor GTPase superfamily. Classic translation factor GTPase family. EF-Tu/EF-1A subfamily.

The protein localises to the cytoplasm. It carries out the reaction GTP + H2O = GDP + phosphate + H(+). Its function is as follows. GTP hydrolase that promotes the GTP-dependent binding of aminoacyl-tRNA to the A-site of ribosomes during protein biosynthesis. The polypeptide is Elongation factor 1-alpha (Thermococcus celer).